A 365-amino-acid polypeptide reads, in one-letter code: Aminomethyltransferase (365 aa).

This sequence belongs to the GcvT family. The glycine cleavage system is composed of four proteins: P, T, L and H.

It catalyses the reaction N(6)-[(R)-S(8)-aminomethyldihydrolipoyl]-L-lysyl-[protein] + (6S)-5,6,7,8-tetrahydrofolate = N(6)-[(R)-dihydrolipoyl]-L-lysyl-[protein] + (6R)-5,10-methylene-5,6,7,8-tetrahydrofolate + NH4(+). Its function is as follows. The glycine cleavage system catalyzes the degradation of glycine. The polypeptide is Aminomethyltransferase (Parafrankia sp. (strain EAN1pec)).